The sequence spans 499 residues: MLTTMQRVHNKPIDSIGGFKHLVKQSNGGDGGVTATDMQEPSIETDKLSYEIFSILESKFLFGYDDDLKLMESRSRDPSPEQETASPAMVEALNGVVPGTVKNQRGKVCVLSIDSGGMRGIIPGKALAYLEHALKSKSGDPNARIADYFDVASGSGIGGIFTAMLFASSDGNRPIFKAEDTWRFLAMKGKSFYNKSPPGILNRVMKTGSGGSGGSGSKLEKAMKESFEELTLKDTLKPVLIPCYDLTSSAPFLFSRADALETDGYDFKLWEVCRATWAEPGVFEPVEMRSVDGKTRCVAVDGGLAMSNPTAAAITHVLHNKQEFPFVRGVEDLLVLSLGTGQLVDVKYDCDKVMKWKAKHWARPAVRISADGAADTVDQAVSMAFGQCRRSNYVRIQANGSSFGPCKPNIDTDASPSNVNMLVGVAEEMLKQKNAESVLFGGKKINEESNYEKLDWLAGELVLEHQRRSCRIAPTVAFKQSGDRRVDQQTIFKDIDCMF.

The PNPLA domain maps to 111 to 314 (LSIDSGGMRG…AMSNPTAAAI (204 aa)). The short motif at 116 to 119 (GGMR) is the GGXR element. Serine 155 acts as the Nucleophile in catalysis. The Proton acceptor role is filled by aspartate 301. Residues 301-303 (DGG) carry the DGA/G motif.

It belongs to the patatin family. Highly expressed in siliques and at lower levels in roots and flowers.

Possesses non-specific lipolytic acyl hydrolase (LAH) activity. Hydrolyzes phospholipids as well as galactolipids. May play a role in disease resistance. The chain is Patatin-like protein 6 (PLP6) from Arabidopsis thaliana (Mouse-ear cress).